Reading from the N-terminus, the 226-residue chain is ATP-dependent dethiobiotin synthetase BioD (226 aa).

12–17 (GVGKTV) provides a ligand contact to ATP. A Mg(2+)-binding site is contributed by threonine 16. Residue lysine 37 is part of the active site. Threonine 41 lines the substrate pocket. ATP-binding positions include aspartate 49, 108–111 (EGAG), 169–170 (GS), and 197–199 (PAG). Positions 49 and 108 each coordinate Mg(2+).

The protein belongs to the dethiobiotin synthetase family. In terms of assembly, homodimer. The cofactor is Mg(2+).

The protein resides in the cytoplasm. The enzyme catalyses (7R,8S)-7,8-diammoniononanoate + CO2 + ATP = (4R,5S)-dethiobiotin + ADP + phosphate + 3 H(+). The protein operates within cofactor biosynthesis; biotin biosynthesis; biotin from 7,8-diaminononanoate: step 1/2. Functionally, catalyzes a mechanistically unusual reaction, the ATP-dependent insertion of CO2 between the N7 and N8 nitrogen atoms of 7,8-diaminopelargonic acid (DAPA, also called 7,8-diammoniononanoate) to form a ureido ring. This chain is ATP-dependent dethiobiotin synthetase BioD, found in Mycobacterium tuberculosis (strain ATCC 25177 / H37Ra).